Reading from the N-terminus, the 546-residue chain is CTP synthase (546 aa).

The segment at 1–269 (MNPNTKIIFV…DAKLVELLNL (269 aa)) is amidoligase domain. CTP is bound at residue S16. Residue S16 participates in UTP binding. Residues 17–22 (SLGKGV) and D74 each bind ATP. Mg(2+) contacts are provided by D74 and E143. CTP contacts are provided by residues 150 to 152 (DIE), 190 to 195 (KTKPTQ), and K226. Residues 190-195 (KTKPTQ) and K226 each bind UTP. The Glutamine amidotransferase type-1 domain maps to 294-546 (TIAMVGKYVS…IHAAVEKSNK (253 aa)). An L-glutamine-binding site is contributed by G356. Residue C383 is the Nucleophile; for glutamine hydrolysis of the active site. L-glutamine-binding positions include 384-387 (LGMQ), E407, and R474. Catalysis depends on residues H519 and E521.

Belongs to the CTP synthase family. As to quaternary structure, homotetramer.

The enzyme catalyses UTP + L-glutamine + ATP + H2O = CTP + L-glutamate + ADP + phosphate + 2 H(+). It catalyses the reaction L-glutamine + H2O = L-glutamate + NH4(+). It carries out the reaction UTP + NH4(+) + ATP = CTP + ADP + phosphate + 2 H(+). It participates in pyrimidine metabolism; CTP biosynthesis via de novo pathway; CTP from UDP: step 2/2. Its activity is regulated as follows. Allosterically activated by GTP, when glutamine is the substrate; GTP has no effect on the reaction when ammonia is the substrate. The allosteric effector GTP functions by stabilizing the protein conformation that binds the tetrahedral intermediate(s) formed during glutamine hydrolysis. Inhibited by the product CTP, via allosteric rather than competitive inhibition. Catalyzes the ATP-dependent amination of UTP to CTP with either L-glutamine or ammonia as the source of nitrogen. Regulates intracellular CTP levels through interactions with the four ribonucleotide triphosphates. The protein is CTP synthase of Francisella philomiragia subsp. philomiragia (strain ATCC 25017 / CCUG 19701 / FSC 153 / O#319-036).